The primary structure comprises 1247 residues: SAM and SH3 domain-containing protein 1 (1247 aa).

A disordered region spans residues 1-39; sequence MEDAGAAGPGPEPEPEPEPEPEPAPEPEPEPKPGAGTSE. Acidic residues predominate over residues 13 to 28; that stretch reads PEPEPEPEPEPAPEPE. Position 90 is a phosphoserine (serine 90). Disordered regions lie at residues 126–145, 221–257, and 316–344; these read VERK…VGKG, AALD…ESVK, and FFDG…LDTW. Serine 248 is subject to Phosphoserine. Positions 331-343 are enriched in low complexity; the sequence is SLTTSPSSSSLDT. Phosphoserine is present on serine 407. The tract at residues 449-573 is disordered; it reads SLGKKVKSVK…DFTPSPYDTD (125 aa). Low complexity-rich tracts occupy residues 468 to 484 and 505 to 523; these read KYSS…DGMP and GGSV…SMSG. Positions 524–536 are enriched in polar residues; the sequence is QTVSTTDSSTSNR. Positions 554–615 constitute an SH3 domain; it reads PFCGRARVHT…KFIYVDVLSE (62 aa). Serine 614 is modified (phosphoserine). 2 disordered regions span residues 616-639 and 713-810; these read DEEK…KSVE and DSQG…LNKN. Residues 622 to 631 are compositionally biased toward basic residues; that stretch reads RPTRRRRKGR. One can recognise an SAM 1 domain in the interval 633 to 697; that stretch reads PQPKSVEDLL…LTAVELLQEY (65 aa). Polar residues predominate over residues 746 to 765; the sequence is SAKSSTEPSLKSFSRNQLGN. 2 positions are modified to phosphoserine: serine 821 and serine 839. Disordered regions lie at residues 846-884, 903-946, and 971-1065; these read EPGA…PLEQ, PQKL…LART, and DAEQ…SELP. Residues 852–860 form a required for interaction with TRAF6 region; the sequence is DVPTEVTEP. Threonine 858 is subject to Phosphothreonine. Residues 1050-1060 show a composition bias toward pro residues; the sequence is GSPPSTRPPPW. Residues 1177-1241 form the SAM 2 domain; the sequence is GCISSVSDWL…LSAARLFKLP (65 aa).

In terms of assembly, interacts with GNAS. Interacts with IQGAP1. Interacts with TRAF6 (via C-terminus); the interaction is LPS-dependent. Interacts with MAP3K7, CHUK and IKBKB. As to expression, expressed ubiquitously, with highest levels in lung, placenta, spleen and thymus. Down-regulated in the majority (74%) of breast tumors in comparison with corresponding normal breast epithelial tissues. Expressed in the epidermis, epidermal keratinocytes, dermal fibroblasts and melanocytes.

It is found in the cytoplasm. Is a positive regulator of NF-kappa-B signaling downstream of TLR4 activation. It acts as a scaffold molecule to assemble a molecular complex that includes TRAF6, MAP3K7, CHUK and IKBKB, thereby facilitating NF-kappa-B signaling activation. Regulates TRAF6 and MAP3K7 ubiquitination. Involved in the regulation of cell mobility. Regulates lipolysaccharide (LPS)-induced endothelial cell migration. Is involved in the regulation of skin pigmentation through the control of melanocyte migration in the epidermis. This chain is SAM and SH3 domain-containing protein 1 (SASH1), found in Homo sapiens (Human).